The following is a 227-amino-acid chain: Phosphoribosylformylglycinamidine synthase subunit PurQ (227 aa).

The region spanning 3–225 is the Glutamine amidotransferase type-1 domain; sequence FAVIVLPGSN…VKNWRDTHVT (223 aa). Cys-86 serves as the catalytic Nucleophile. Catalysis depends on residues His-194 and Glu-196.

As to quaternary structure, part of the FGAM synthase complex composed of 1 PurL, 1 PurQ and 2 PurS subunits.

Its subcellular location is the cytoplasm. The catalysed reaction is N(2)-formyl-N(1)-(5-phospho-beta-D-ribosyl)glycinamide + L-glutamine + ATP + H2O = 2-formamido-N(1)-(5-O-phospho-beta-D-ribosyl)acetamidine + L-glutamate + ADP + phosphate + H(+). It catalyses the reaction L-glutamine + H2O = L-glutamate + NH4(+). It participates in purine metabolism; IMP biosynthesis via de novo pathway; 5-amino-1-(5-phospho-D-ribosyl)imidazole from N(2)-formyl-N(1)-(5-phospho-D-ribosyl)glycinamide: step 1/2. Part of the phosphoribosylformylglycinamidine synthase complex involved in the purines biosynthetic pathway. Catalyzes the ATP-dependent conversion of formylglycinamide ribonucleotide (FGAR) and glutamine to yield formylglycinamidine ribonucleotide (FGAM) and glutamate. The FGAM synthase complex is composed of three subunits. PurQ produces an ammonia molecule by converting glutamine to glutamate. PurL transfers the ammonia molecule to FGAR to form FGAM in an ATP-dependent manner. PurS interacts with PurQ and PurL and is thought to assist in the transfer of the ammonia molecule from PurQ to PurL. The protein is Phosphoribosylformylglycinamidine synthase subunit PurQ of Bacillus pumilus (strain SAFR-032).